Here is a 119-residue protein sequence, read N- to C-terminus: Small ribosomal subunit protein uS13m (119 aa).

It belongs to the universal ribosomal protein uS13 family. In terms of assembly, part of the small ribosomal subunit.

It is found in the mitochondrion. Functionally, located at the top of the head of the small subunit, it contacts several helices of the small subunit rRNA. The protein is Small ribosomal subunit protein uS13m (RPS13) of Acanthamoeba castellanii (Amoeba).